The following is a 61-amino-acid chain: MMKDLFTFVMDKNISIDINSDWFKELWYPLSKKCRSNTLFDFKDEVKAPPPPERAVKVWLY.

The protein is Putative MSV199 domain-containing protein 200R of Invertebrate iridescent virus 6 (IIV-6).